Consider the following 395-residue polypeptide: Probable G-protein coupled receptor npr-29 (395 aa).

4 consecutive transmembrane segments (helical) span residues 38-58 (VVGF…LFAP), 66-86 (ILFY…AMLL), 89-109 (IELV…YLIF), and 148-168 (AIIQ…PVFA). N-linked (GlcNAc...) asparagine glycosylation is present at asparagine 180. The next 3 helical transmembrane spans lie at 202 to 222 (FWFN…GIIY), 252 to 272 (VITT…PYWV), and 287 to 307 (IIII…AYPL).

Belongs to the G-protein coupled receptor 1 family.

The protein localises to the cell membrane. In terms of biological role, not known. Putative receptor. In Caenorhabditis elegans, this protein is Probable G-protein coupled receptor npr-29.